The sequence spans 247 residues: Trypsin (247 aa).

The first 21 residues, 1 to 21 (LTTVISYFALVAFALVGVSYA), serve as a signal peptide directing secretion. A propeptide spans 22–30 (TPKASINGR) (activation peptide). The 217-residue stretch at 31–247 (IVGGEMTDIS…QSNFPGVYGI (217 aa)) folds into the Peptidase S1 domain. A disulfide bond links Cys61 and Cys77. Catalysis depends on charge relay system residues His76 and Asp120. 2 disulfides stabilise this stretch: Cys185/Cys201 and Cys212/Cys236. Ser216 (charge relay system) is an active-site residue.

The protein belongs to the peptidase S1 family. As to expression, midgut.

Its subcellular location is the secreted. It localises to the extracellular space. The enzyme catalyses Preferential cleavage: Arg-|-Xaa, Lys-|-Xaa.. This chain is Trypsin, found in Simulium vittatum (Striped black fly).